Here is a 608-residue protein sequence, read N- to C-terminus: RAS guanyl-releasing protein 2 (608 aa).

In terms of domain architecture, N-terminal Ras-GEF spans 4–126 (TLDLDKGCTV…SLIDIENVPT (123 aa)). Phosphoserine occurs at positions 116, 117, and 147. The 234-residue stretch at 154 to 387 (EPLELAAHLT…YQLSLQREPR (234 aa)) folds into the Ras-GEF domain. A disordered region spans residues 382 to 407 (LQREPRSKSSPTSPTTCTPPPRPPVL). EF-hand domains lie at 426–461 (HIEK…FPYL) and 463–490 (AFGD…SSSM). Residues aspartate 439, aspartate 441, aspartate 443, histidine 445, glutamate 450, aspartate 468, asparagine 470, aspartate 472, cysteine 474, and glutamate 479 each coordinate Ca(2+). The Phorbol-ester/DAG-type zinc finger occupies 498-548 (VHNFHESNSLRPVACRHCKALILGIYKQGLKCRACGVNCHKQCKDRLSVEC). A phosphoserine mark is found at serine 554 and serine 575. Residues 556 to 591 (SLEGSAPSPSPTHTHHRAFSFSLPRPGRRGSRPPEI) form a disordered region.

The protein belongs to the RASGRP family. In terms of assembly, forms a signaling complex with RAP1 and BRAF. Interacts with RAP1. Interacts with F-actin.

It is found in the cytoplasm. It localises to the cytosol. Its subcellular location is the cell membrane. The protein localises to the synapse. The protein resides in the synaptosome. It is found in the cell projection. It localises to the ruffle membrane. Functionally, functions as a calcium- and DAG-regulated nucleotide exchange factor specifically activating Rap through the exchange of bound GDP for GTP. May also activate other GTPases such as RRAS, RRAS2, NRAS, KRAS but not HRAS. Functions in aggregation of platelets and adhesion of T-lymphocytes and neutrophils probably through inside-out integrin activation. May function in the muscarinic acetylcholine receptor M1/CHRM1 signaling pathway. This chain is RAS guanyl-releasing protein 2 (RASGRP2), found in Bos taurus (Bovine).